A 192-amino-acid chain; its full sequence is Nucleosome assembly protein 1-like 5 (192 aa).

Positions 1-12 (MADSQNQGSAEP) are enriched in polar residues. The interval 1 to 76 (MADSQNQGSA…APKPRNDFIE (76 aa)) is disordered. 2 stretches are compositionally biased toward low complexity: residues 15–28 (AAAA…AAAA) and 40–55 (GDSD…VVGQ). Residues 86-112 (VLALKKLQKRCDKIEAKFDKEFQALEK) adopt a coiled-coil conformation. A disordered region spans residues 136–192 (AWTLEGDEEDDDDDEYEDEEEGEEEDEEEEEPAAEAAGTAAAKDEGPHSAVPDDAKK). The span at 140–168 (EGDEEDDDDDEYEDEEEGEEEDEEEEEPA) shows a compositional bias: acidic residues. Over residues 177 to 192 (AKDEGPHSAVPDDAKK) the composition is skewed to basic and acidic residues.

Belongs to the nucleosome assembly protein (NAP) family.

Its subcellular location is the nucleus. This Bos taurus (Bovine) protein is Nucleosome assembly protein 1-like 5 (NAP1L5).